The primary structure comprises 315 residues: GPN-loop GTPase 2 homolog (315 aa).

Residue 12–17 (GSGKTV) coordinates GTP. Residues 69-71 (GPN) carry the Gly-Pro-Asn (GPN)-loop; involved in dimer interface motif. 171-174 (SKMD) contributes to the GTP binding site.

The protein belongs to the GPN-loop GTPase family. In terms of assembly, heterodimers with gpn1 or gpn3. Binds to RNA polymerase II (RNAPII).

In terms of biological role, small GTPase required for proper localization of RNA polymerase II and III (RNAPII and RNAPIII). May act at an RNAP assembly step prior to nuclear import. The polypeptide is GPN-loop GTPase 2 homolog (gpn2) (Dictyostelium discoideum (Social amoeba)).